The sequence spans 136 residues: Small ribosomal subunit protein bS16 (136 aa).

The segment covering 114–123 (TLKARRRRAK) has biased composition (basic residues). The disordered stretch occupies residues 114-136 (TLKARRRRAKKEAEAASASSAEG).

This sequence belongs to the bacterial ribosomal protein bS16 family.

The chain is Small ribosomal subunit protein bS16 from Chlorobium chlorochromatii (strain CaD3).